Here is a 325-residue protein sequence, read N- to C-terminus: Small ribosomal subunit biogenesis GTPase RsgA (325 aa).

Residues 80–241 form the CP-type G domain; the sequence is LSKQIHIIAS…IIDTPGIKGF (162 aa). GTP contacts are provided by residues 129 to 132 and 183 to 191; these read NKID and GHSGVGKST. 4 residues coordinate Zn(2+): Cys265, Cys270, His272, and Cys278.

The protein belongs to the TRAFAC class YlqF/YawG GTPase family. RsgA subfamily. In terms of assembly, monomer. Associates with 30S ribosomal subunit, binds 16S rRNA. Zn(2+) is required as a cofactor.

The protein localises to the cytoplasm. One of several proteins that assist in the late maturation steps of the functional core of the 30S ribosomal subunit. Helps release RbfA from mature subunits. May play a role in the assembly of ribosomal proteins into the subunit. Circularly permuted GTPase that catalyzes slow GTP hydrolysis, GTPase activity is stimulated by the 30S ribosomal subunit. The chain is Small ribosomal subunit biogenesis GTPase RsgA from Flavobacterium johnsoniae (strain ATCC 17061 / DSM 2064 / JCM 8514 / BCRC 14874 / CCUG 350202 / NBRC 14942 / NCIMB 11054 / UW101) (Cytophaga johnsonae).